Consider the following 356-residue polypeptide: Cyclin-A1-4 (356 aa).

Belongs to the cyclin family. Cyclin AB subfamily.

This chain is Cyclin-A1-4 (CYCA1-4), found in Oryza sativa subsp. japonica (Rice).